The following is a 238-amino-acid chain: Ribonuclease 3 (238 aa).

Residues 4–127 form the RNase III domain; that stretch reads IEEFEKRLGY…TMGAIYLETG (124 aa). Glutamate 40 is a Mg(2+) binding site. Aspartate 44 is an active-site residue. Mg(2+) contacts are provided by asparagine 113 and glutamate 116. Glutamate 116 is an active-site residue. Residues 154–223 enclose the DRBM domain; it reads DYKTALQELT…ARIALEIFHR (70 aa).

This sequence belongs to the ribonuclease III family. In terms of assembly, homodimer. It depends on Mg(2+) as a cofactor.

It localises to the cytoplasm. It carries out the reaction Endonucleolytic cleavage to 5'-phosphomonoester.. In terms of biological role, digests double-stranded RNA. Involved in the processing of primary rRNA transcript to yield the immediate precursors to the large and small rRNAs (23S and 16S). Processes some mRNAs, and tRNAs when they are encoded in the rRNA operon. Processes pre-crRNA and tracrRNA of type II CRISPR loci if present in the organism. The sequence is that of Ribonuclease 3 from Wolinella succinogenes (strain ATCC 29543 / DSM 1740 / CCUG 13145 / JCM 31913 / LMG 7466 / NCTC 11488 / FDC 602W) (Vibrio succinogenes).